Reading from the N-terminus, the 448-residue chain is Probable glycine dehydrogenase (decarboxylating) subunit 1 (448 aa).

Belongs to the GcvP family. N-terminal subunit subfamily. The glycine cleavage system is composed of four proteins: P, T, L and H. In this organism, the P 'protein' is a heterodimer of two subunits.

It carries out the reaction N(6)-[(R)-lipoyl]-L-lysyl-[glycine-cleavage complex H protein] + glycine + H(+) = N(6)-[(R)-S(8)-aminomethyldihydrolipoyl]-L-lysyl-[glycine-cleavage complex H protein] + CO2. Functionally, the glycine cleavage system catalyzes the degradation of glycine. The P protein binds the alpha-amino group of glycine through its pyridoxal phosphate cofactor; CO(2) is released and the remaining methylamine moiety is then transferred to the lipoamide cofactor of the H protein. The sequence is that of Probable glycine dehydrogenase (decarboxylating) subunit 1 from Exiguobacterium sibiricum (strain DSM 17290 / CCUG 55495 / CIP 109462 / JCM 13490 / 255-15).